The sequence spans 445 residues: Phosphoglucosamine mutase (445 aa).

The active-site Phosphoserine intermediate is S101. 4 residues coordinate Mg(2+): S101, D240, D242, and D244. At S101 the chain carries Phosphoserine.

Belongs to the phosphohexose mutase family. The cofactor is Mg(2+). In terms of processing, activated by phosphorylation.

The enzyme catalyses alpha-D-glucosamine 1-phosphate = D-glucosamine 6-phosphate. Functionally, catalyzes the conversion of glucosamine-6-phosphate to glucosamine-1-phosphate. The chain is Phosphoglucosamine mutase from Pseudomonas fluorescens (strain Pf0-1).